A 320-amino-acid chain; its full sequence is 1-aminocyclopropane-1-carboxylate oxidase (320 aa).

The Fe2OG dioxygenase domain occupies 154 to 254 (PTFGTKVSNY…RMSLASFYNP (101 aa)). The Fe cation site is built by His-178, Asp-180, and His-235.

The protein belongs to the iron/ascorbate-dependent oxidoreductase family. Fe cation is required as a cofactor.

The enzyme catalyses 1-aminocyclopropane-1-carboxylate + L-ascorbate + O2 = ethene + L-dehydroascorbate + hydrogen cyanide + CO2 + 2 H2O. It participates in alkene biosynthesis; ethylene biosynthesis via S-adenosyl-L-methionine; ethylene from S-adenosyl-L-methionine: step 2/2. The protein is 1-aminocyclopropane-1-carboxylate oxidase (ACO) of Persea americana (Avocado).